The sequence spans 329 residues: o-succinylbenzoate synthase (329 aa).

K140 (proton donor) is an active-site residue. Mg(2+) is bound by residues D168, E197, and D220. The Proton acceptor role is filled by K242.

It belongs to the mandelate racemase/muconate lactonizing enzyme family. MenC type 1 subfamily. A divalent metal cation is required as a cofactor.

The catalysed reaction is (1R,6R)-6-hydroxy-2-succinyl-cyclohexa-2,4-diene-1-carboxylate = 2-succinylbenzoate + H2O. The protein operates within quinol/quinone metabolism; 1,4-dihydroxy-2-naphthoate biosynthesis; 1,4-dihydroxy-2-naphthoate from chorismate: step 4/7. Its pathway is quinol/quinone metabolism; menaquinone biosynthesis. Converts 2-succinyl-6-hydroxy-2,4-cyclohexadiene-1-carboxylate (SHCHC) to 2-succinylbenzoate (OSB). The protein is o-succinylbenzoate synthase of Haemophilus influenzae (strain ATCC 51907 / DSM 11121 / KW20 / Rd).